Here is a 63-residue protein sequence, read N- to C-terminus: Large ribosomal subunit protein uL29 (63 aa).

Belongs to the universal ribosomal protein uL29 family.

In Proteus mirabilis (strain HI4320), this protein is Large ribosomal subunit protein uL29.